The chain runs to 146 residues: MHPAHLLVLLAVCVSLLGASDIPPLPLNLAQFGFMIKCANHRSRPVSHYMDYGCYCGKGGSGTPVDELDRCCQVHDECYGEAEKRFKCVPYMTLYSWKCYGTAPSCNTKTDCQRFVCNCDAKAAECFARSPYQNKNWNINTKARCK.

The first 27 residues, 1–27 (MHPAHLLVLLAVCVSLLGASDIPPLPL), serve as a signal peptide directing secretion. Cystine bridges form between C38-C99, C54-C145, C56-C72, C71-C126, C78-C119, C88-C112, and C106-C117. Ca(2+) is bound by residues Y55, G57, and G59. H75 is a catalytic residue. D76 provides a ligand contact to Ca(2+). Residue D120 is part of the active site.

Belongs to the phospholipase A2 family. Group I subfamily. D49 sub-subfamily. As to quaternary structure, heterotrimer of alpha, beta, and gamma chains; non-covalently linked. The cofactor is Ca(2+). In terms of tissue distribution, expressed by the venom gland.

The protein resides in the secreted. It catalyses the reaction a 1,2-diacyl-sn-glycero-3-phosphocholine + H2O = a 1-acyl-sn-glycero-3-phosphocholine + a fatty acid + H(+). In terms of biological role, heterotrimer: Snake venom phospholipase A2 (PLA2) heterotrimer that acts as a potent presynaptic neurotoxin by blocking synaptic transmission and synaptic vesicle recycling. May act by binding in a calcium-dependent fashion to neurotonal pentraxin-1 (NPTX1) and neurotonal pentraxin-2 (NPTX2), but not to neuronal pentraxin receptor (NPTXR). Also binds to taipoxin-associated calcium binding protein 49 (RCN2), a protein localized in the lumen of endoplasmic reticulum. Its function is as follows. Monomer (alpha chain): Snake venom phospholipase A2 (PLA2) alpha chain that possesses the same high enzymatic activity than the heterotrimer. PLA2 catalyzes the calcium-dependent hydrolysis of the 2-acyl groups in 3-sn-phosphoglycerides. In Oxyuranus microlepidotus (Inland taipan), this protein is Basic phospholipase A2 paradoxin-like alpha chain.